We begin with the raw amino-acid sequence, 309 residues long: MPEKDEKEQHMRKPDWLKIKLNTNESYTGLKKMMREKKLHTVCEEARCPNIHECWAVRKTATFMILGDICTRGCRFCAVKTGLPTELDLQEPERVAESVETMGLKHVVITAVARDDLKDGGAAVFAETVRAVRRKNPFCTIEVLPSDMLGNESSLQTLMDARPNIMNHNIETVRRLTPKVRARAKYDRTLEFLRRAKEMHPDIPTKSSLMVGLGETKEEILETMDDLRANNVDILTIGQYLQPTKKHLKVIKYYHPDEFAELKEIAMQKGFSHCEAGPLVRSSYHADEQVNQAQVNMEARKAQGEQQRV.

[4Fe-4S] cluster contacts are provided by cysteine 43, cysteine 48, cysteine 54, cysteine 70, cysteine 74, cysteine 77, and serine 283. Positions 56-272 (AVRKTATFMI…KEIAMQKGFS (217 aa)) constitute a Radical SAM core domain.

The protein belongs to the radical SAM superfamily. Lipoyl synthase family. [4Fe-4S] cluster serves as cofactor.

Its subcellular location is the cytoplasm. It carries out the reaction [[Fe-S] cluster scaffold protein carrying a second [4Fe-4S](2+) cluster] + N(6)-octanoyl-L-lysyl-[protein] + 2 oxidized [2Fe-2S]-[ferredoxin] + 2 S-adenosyl-L-methionine + 4 H(+) = [[Fe-S] cluster scaffold protein] + N(6)-[(R)-dihydrolipoyl]-L-lysyl-[protein] + 4 Fe(3+) + 2 hydrogen sulfide + 2 5'-deoxyadenosine + 2 L-methionine + 2 reduced [2Fe-2S]-[ferredoxin]. It functions in the pathway protein modification; protein lipoylation via endogenous pathway; protein N(6)-(lipoyl)lysine from octanoyl-[acyl-carrier-protein]. Functionally, catalyzes the radical-mediated insertion of two sulfur atoms into the C-6 and C-8 positions of the octanoyl moiety bound to the lipoyl domains of lipoate-dependent enzymes, thereby converting the octanoylated domains into lipoylated derivatives. This chain is Lipoyl synthase, found in Shouchella clausii (strain KSM-K16) (Alkalihalobacillus clausii).